Reading from the N-terminus, the 240-residue chain is UDP-2,3-diacylglucosamine hydrolase (240 aa).

Mn(2+)-binding residues include aspartate 9, histidine 11, aspartate 43, asparagine 81, and histidine 116. 81-82 is a substrate binding site; the sequence is NR. Residues aspartate 124, serine 162, lysine 166, lysine 169, and histidine 197 each contribute to the substrate site. Mn(2+)-binding residues include histidine 197 and histidine 199.

The protein belongs to the LpxH family. Mn(2+) serves as cofactor.

It is found in the cell inner membrane. The enzyme catalyses UDP-2-N,3-O-bis[(3R)-3-hydroxytetradecanoyl]-alpha-D-glucosamine + H2O = 2-N,3-O-bis[(3R)-3-hydroxytetradecanoyl]-alpha-D-glucosaminyl 1-phosphate + UMP + 2 H(+). Its pathway is glycolipid biosynthesis; lipid IV(A) biosynthesis; lipid IV(A) from (3R)-3-hydroxytetradecanoyl-[acyl-carrier-protein] and UDP-N-acetyl-alpha-D-glucosamine: step 4/6. Hydrolyzes the pyrophosphate bond of UDP-2,3-diacylglucosamine to yield 2,3-diacylglucosamine 1-phosphate (lipid X) and UMP by catalyzing the attack of water at the alpha-P atom. Involved in the biosynthesis of lipid A, a phosphorylated glycolipid that anchors the lipopolysaccharide to the outer membrane of the cell. This chain is UDP-2,3-diacylglucosamine hydrolase, found in Neisseria gonorrhoeae (strain ATCC 700825 / FA 1090).